Consider the following 122-residue polypeptide: Small ribosomal subunit protein uS13 (122 aa).

Positions 98–122 are disordered; sequence VRGQKTKSNARTRKGPRPSRIKKKK. Over residues 101-122 the composition is skewed to basic residues; that stretch reads QKTKSNARTRKGPRPSRIKKKK.

This sequence belongs to the universal ribosomal protein uS13 family. As to quaternary structure, part of the 30S ribosomal subunit. Forms a loose heterodimer with protein S19. Forms two bridges to the 50S subunit in the 70S ribosome.

Functionally, located at the top of the head of the 30S subunit, it contacts several helices of the 16S rRNA. In the 70S ribosome it contacts the 23S rRNA (bridge B1a) and protein L5 of the 50S subunit (bridge B1b), connecting the 2 subunits; these bridges are implicated in subunit movement. Contacts the tRNAs in the A and P-sites. The chain is Small ribosomal subunit protein uS13 from Thermosipho africanus (strain TCF52B).